Reading from the N-terminus, the 355-residue chain is 3-dehydroquinate synthase (355 aa).

NAD(+) contacts are provided by residues 66 to 71 (SGETTK), 100 to 104 (GATGD), 124 to 125 (TT), Lys-136, Lys-145, and 163 to 166 (FLET). Positions 178, 242, and 256 each coordinate Zn(2+).

The protein belongs to the sugar phosphate cyclases superfamily. Dehydroquinate synthase family. It depends on Co(2+) as a cofactor. Zn(2+) is required as a cofactor. Requires NAD(+) as cofactor.

Its subcellular location is the cytoplasm. The enzyme catalyses 7-phospho-2-dehydro-3-deoxy-D-arabino-heptonate = 3-dehydroquinate + phosphate. It functions in the pathway metabolic intermediate biosynthesis; chorismate biosynthesis; chorismate from D-erythrose 4-phosphate and phosphoenolpyruvate: step 2/7. Functionally, catalyzes the conversion of 3-deoxy-D-arabino-heptulosonate 7-phosphate (DAHP) to dehydroquinate (DHQ). The protein is 3-dehydroquinate synthase of Staphylococcus saprophyticus subsp. saprophyticus (strain ATCC 15305 / DSM 20229 / NCIMB 8711 / NCTC 7292 / S-41).